We begin with the raw amino-acid sequence, 325 residues long: MITQRQLSILNAIVEDYVDLGQPIGSKALIDRHHLDVSPATIRNEMKQLEDLNFLEKTHSSSGRSPSEEGFRLYVDQLLKQTSRQNKNKIQRLNQLLIENHYDISSALSYFANELSMKSHYATLVVRPKHSEEMINNVHLIKANDSIMILVIIYNSGHVEHFHLNSALELSSDRLIAISNFISNNNIEISAKLSDKIRSFANSNEENQFINDIVKMINSHISKQSNSIFLGGKVKLIDALNESNVSSIQPILQYLESERITELLQTISTNDINVKIGKEIDESLSDISIVTSQYHFDNSLKGQIAVIGPTAMRYQNVIQLLNQIW.

The protein belongs to the HrcA family.

Functionally, negative regulator of class I heat shock genes (grpE-dnaK-dnaJ and groELS operons). Prevents heat-shock induction of these operons. In Staphylococcus haemolyticus (strain JCSC1435), this protein is Heat-inducible transcription repressor HrcA.